A 426-amino-acid polypeptide reads, in one-letter code: Enolase (426 aa).

Position 163 (Q163) interacts with (2R)-2-phosphoglycerate. E205 (proton donor) is an active-site residue. Residues D242, E285, and D312 each coordinate Mg(2+). Residues K337, R366, S367, and K388 each coordinate (2R)-2-phosphoglycerate. Catalysis depends on K337, which acts as the Proton acceptor.

It belongs to the enolase family. Requires Mg(2+) as cofactor.

The protein resides in the cytoplasm. It localises to the secreted. The protein localises to the cell surface. It catalyses the reaction (2R)-2-phosphoglycerate = phosphoenolpyruvate + H2O. The protein operates within carbohydrate degradation; glycolysis; pyruvate from D-glyceraldehyde 3-phosphate: step 4/5. Catalyzes the reversible conversion of 2-phosphoglycerate (2-PG) into phosphoenolpyruvate (PEP). It is essential for the degradation of carbohydrates via glycolysis. This chain is Enolase, found in Nitrobacter winogradskyi (strain ATCC 25391 / DSM 10237 / CIP 104748 / NCIMB 11846 / Nb-255).